Consider the following 379-residue polypeptide: Reducing end xylose-releasing exo-oligoxylanase (379 aa).

Residue E66 is the Proton donor of the active site. D259 functions as the Proton acceptor in the catalytic mechanism.

Belongs to the glycosyl hydrolase 8 (cellulase D) family.

The catalysed reaction is Hydrolysis of (1-&gt;4)-beta-D-xylose residues from the reducing end of oligosaccharides.. Its function is as follows. Hydrolyzes xylooligosaccharides with a degree of polymerization of greater than or equal to 3, releasing xylose from the reducing end. Has low activity on birchwood xylan, oat spelt xylan and arabinoxylan. The protein is Reducing end xylose-releasing exo-oligoxylanase of Bifidobacterium adolescentis (strain ATCC 15703 / DSM 20083 / NCTC 11814 / E194a).